Consider the following 339-residue polypeptide: DNA-directed RNA polymerase subunit alpha (339 aa).

Residues 1 to 233 form an alpha N-terminal domain (alpha-NTD) region; it reads MVREEVAGST…DLFLPFLHAE (233 aa). The tract at residues 266–339 is alpha C-terminal domain (alpha-CTD); the sequence is GIPLNCIFID…IDLLKNKLSF (74 aa).

The protein belongs to the RNA polymerase alpha chain family. In terms of assembly, in plastids the minimal PEP RNA polymerase catalytic core is composed of four subunits: alpha, beta, beta', and beta''. When a (nuclear-encoded) sigma factor is associated with the core the holoenzyme is formed, which can initiate transcription.

It localises to the plastid. It is found in the chloroplast. The enzyme catalyses RNA(n) + a ribonucleoside 5'-triphosphate = RNA(n+1) + diphosphate. Its function is as follows. DNA-dependent RNA polymerase catalyzes the transcription of DNA into RNA using the four ribonucleoside triphosphates as substrates. The protein is DNA-directed RNA polymerase subunit alpha of Hordeum bulbosum (Bulbous barley).